A 292-amino-acid polypeptide reads, in one-letter code: Small ribosomal subunit biogenesis GTPase RsgA (292 aa).

In terms of domain architecture, CP-type G spans 64 to 221 (RSELFRPAVA…LVDTPGFSSL (158 aa)). GTP-binding positions include 113–116 (NKMD) and 164–172 (GPSGVGKST). Cysteine 245, cysteine 250, histidine 252, and cysteine 258 together coordinate Zn(2+).

This sequence belongs to the TRAFAC class YlqF/YawG GTPase family. RsgA subfamily. In terms of assembly, monomer. Associates with 30S ribosomal subunit, binds 16S rRNA. Zn(2+) is required as a cofactor.

It is found in the cytoplasm. Functionally, one of several proteins that assist in the late maturation steps of the functional core of the 30S ribosomal subunit. Helps release RbfA from mature subunits. May play a role in the assembly of ribosomal proteins into the subunit. Circularly permuted GTPase that catalyzes slow GTP hydrolysis, GTPase activity is stimulated by the 30S ribosomal subunit. The polypeptide is Small ribosomal subunit biogenesis GTPase RsgA (Clostridium botulinum (strain Loch Maree / Type A3)).